Reading from the N-terminus, the 252-residue chain is ATP synthase subunit a (252 aa).

Helical transmembrane passes span 29-49 (FTNVSLFTVVTVVITAAFLFI), 87-107 (FFPLVFSLFTFILVANFIGLF), 117-137 (IMITFSLAMVVILTVIGYGFY), 146-166 (LFVPSGVPVVVLPLVTMIEII), 196-216 (FIVSMIGVGIVGVGGAVLPLI), and 219-239 (VAITALEFLVAFLQAYVFTVL).

It belongs to the ATPase A chain family. F-type ATPases have 2 components, CF(1) - the catalytic core - and CF(0) - the membrane proton channel. CF(1) has five subunits: alpha(3), beta(3), gamma(1), delta(1), epsilon(1). CF(0) has three main subunits: a(1), b(2) and c(9-12). The alpha and beta chains form an alternating ring which encloses part of the gamma chain. CF(1) is attached to CF(0) by a central stalk formed by the gamma and epsilon chains, while a peripheral stalk is formed by the delta and b chains.

It is found in the cell inner membrane. Key component of the proton channel; it plays a direct role in the translocation of protons across the membrane. This chain is ATP synthase subunit a, found in Bartonella tribocorum (strain CIP 105476 / IBS 506).